The chain runs to 100 residues: Urease subunit gamma (100 aa).

It belongs to the urease gamma subunit family. In terms of assembly, heterotrimer of UreA (gamma), UreB (beta) and UreC (alpha) subunits. Three heterotrimers associate to form the active enzyme.

It localises to the cytoplasm. The enzyme catalyses urea + 2 H2O + H(+) = hydrogencarbonate + 2 NH4(+). The protein operates within nitrogen metabolism; urea degradation; CO(2) and NH(3) from urea (urease route): step 1/1. Functionally, ureolysis may allow urea to be employed as a nitrogen source for growth and produces ammonia which may protect from killing at low pH. The chain is Urease subunit gamma from Streptococcus salivarius (strain 57.I).